The primary structure comprises 550 residues: Hydroxylamine reductase (550 aa).

The [2Fe-2S] cluster site is built by cysteine 3, cysteine 6, cysteine 18, and cysteine 25. Hybrid [4Fe-2O-2S] cluster contacts are provided by histidine 249, glutamate 273, cysteine 317, cysteine 405, cysteine 433, cysteine 458, glutamate 492, and lysine 494. Cysteine persulfide is present on cysteine 405.

It belongs to the HCP family. The cofactor is [2Fe-2S] cluster. It depends on hybrid [4Fe-2O-2S] cluster as a cofactor.

It is found in the cytoplasm. It catalyses the reaction A + NH4(+) + H2O = hydroxylamine + AH2 + H(+). Functionally, catalyzes the reduction of hydroxylamine to form NH(3) and H(2)O. The sequence is that of Hydroxylamine reductase from Salmonella choleraesuis (strain SC-B67).